We begin with the raw amino-acid sequence, 142 residues long: Large ribosomal subunit protein uL13 (142 aa).

It belongs to the universal ribosomal protein uL13 family. In terms of assembly, part of the 50S ribosomal subunit.

Functionally, this protein is one of the early assembly proteins of the 50S ribosomal subunit, although it is not seen to bind rRNA by itself. It is important during the early stages of 50S assembly. In Pseudomonas fluorescens (strain ATCC BAA-477 / NRRL B-23932 / Pf-5), this protein is Large ribosomal subunit protein uL13.